The sequence spans 430 residues: F-box protein At1g49990 (430 aa).

An F-box domain is found at 1-45 (METGRRRTIPEVEILARLPLRSIARFKSVCKRWKSVIESDYFRRL).

This chain is F-box protein At1g49990, found in Arabidopsis thaliana (Mouse-ear cress).